The chain runs to 443 residues: ATP-dependent protease ATPase subunit HslU (443 aa).

ATP contacts are provided by residues isoleucine 18 and 60-65 (GVGKTE). The interval 142–162 (LGFEASPSEESNATRQKFRKK) is disordered. ATP contacts are provided by aspartate 256, glutamate 321, and arginine 393.

Belongs to the ClpX chaperone family. HslU subfamily. In terms of assembly, a double ring-shaped homohexamer of HslV is capped on each side by a ring-shaped HslU homohexamer. The assembly of the HslU/HslV complex is dependent on binding of ATP.

It localises to the cytoplasm. Functionally, ATPase subunit of a proteasome-like degradation complex; this subunit has chaperone activity. The binding of ATP and its subsequent hydrolysis by HslU are essential for unfolding of protein substrates subsequently hydrolyzed by HslV. HslU recognizes the N-terminal part of its protein substrates and unfolds these before they are guided to HslV for hydrolysis. The chain is ATP-dependent protease ATPase subunit HslU from Nitrosomonas europaea (strain ATCC 19718 / CIP 103999 / KCTC 2705 / NBRC 14298).